The following is a 654-amino-acid chain: Endoplasmic reticulum chaperone BiP (654 aa).

Residues 1–18 form the signal peptide; sequence MKLSLVAAMLLLLSAARA. The tract at residues 1-80 is required for interaction with ELAPOR1; sequence MKLSLVAAML…EGERLIGDAA (80 aa). Residue 36 to 39 coordinates ATP; it reads GTTY. A Phosphoserine modification is found at Ser-86. Lys-96 contributes to the ATP binding site. N6-acetyllysine is present on Lys-125. The segment at 125 to 280 is nucleotide-binding (NBD); sequence KPYIQVDIGG…KKKTGKDVRK (156 aa). At Tyr-160 the chain carries 3'-nitrotyrosine. Lys-213 is subject to N6-acetyllysine. 227–229 provides a ligand contact to ATP; the sequence is GGT. Lys-271 carries the post-translational modification N6-acetyllysine. Residue 293 to 300 coordinates ATP; it reads EKAKRALS. Lys-326 is modified (N6-acetyllysine). Lys-352 is covalently cross-linked (Glycyl lysine isopeptide (Lys-Gly) (interchain with G-Cter in SUMO2)). Lys-353 carries the N6-acetyllysine; alternate modification. Residue Lys-353 forms a Glycyl lysine isopeptide (Lys-Gly) (interchain with G-Cter in SUMO1); alternate linkage. 364-367 provides a ligand contact to ATP; sequence GSTR. Residues 409–419 are interdomain linker; that stretch reads QDTGDLVLLDV. The tract at residues 420–500 is substrate-binding (SBD); it reads CPLTLGIETV…PRGVPQIEVT (81 aa). Position 447 is an N6-succinyllysine (Lys-447). Position 492 is an omega-N-methylarginine (Arg-492). Thr-518 is modified (O-AMP-threonine; alternate). Thr-518 is subject to Phosphothreonine; alternate. Lys-585 is modified (N6,N6,N6-trimethyllysine; by METTL21A; in vitro). Residue Lys-585 is modified to N6,N6-dimethyllysine; alternate. The residue at position 585 (Lys-585) is an N6-methyllysine; alternate. Lys-591 is subject to N6-methyllysine. A disordered region spans residues 633–654; the sequence is KLYGSAGPPPTGEEDTAEKDEL. Phosphothreonine is present on residues Thr-643 and Thr-648. Residues 644–654 show a composition bias toward acidic residues; it reads GEEDTAEKDEL. Positions 651–654 match the Prevents secretion from ER motif; sequence KDEL.

The protein belongs to the heat shock protein 70 family. In terms of assembly, monomer and homooligomer; homooligomerization via the interdomain linker inactivates the chaperone activity and acts as a storage of HSPA5/BiP molecules. Interacts with DNAJC1 (via J domain). Component of an EIF2 complex at least composed of CELF1/CUGBP1, CALR, CALR3, EIF2S1, EIF2S2, HSP90B1 and HSPA5. Part of a large chaperone multiprotein complex comprising DNAJB11, HSP90B1, HSPA5, HYOU, PDIA2, PDIA4, PDIA6, PPIB, SDF2L1, UGGT1 and very small amounts of ERP29, but not, or at very low levels, CALR nor CANX. Interacts with TMEM132A and TRIM21. May form a complex with ERLEC1, OS9, SEL1L and SYVN1. Interacts with DNAJC10. Interacts with DNAJB9/ERdj4; leading to recruit HSPA5/BiP to ERN1/IRE1. Interacts with ERN1/IRE1 (via luminal domain); the interaction takes place following interaction with DNAJB9/ERdj4 and leads to inactivate ERN1/IRE1, the interaction also competitively inhibits ERN1 interaction with MANF. Interacts directly with MANF (via SAP domain); the interaction inhibits ATP binding to HSPA5/BiP and subsequent nucleotide exchange. Interacts with EIF2AK3/PERK (via luminal domain); interaction leads to inactivate EIF2AK3/PERK. Interacts with MX1. Interacts with METTL23. Interacts with CEMIP; the interaction induces calcium leakage from the endoplasmic reticulum and cell migration. Interacts with PCSK4 form; the interaction takes place in the endoplasmic reticulum. Interacts with CIPC. Interacts with CCDC88B (via C-terminus); the interaction opposes ERN1-mediated JNK activation, protecting against apoptosis. Interacts with INPP5K; necessary for INPP5K localization at the endoplasmic reticulum. Interacts with MANF; the interaction is direct. Interacts with LOXL2; leading to activate the ERN1/IRE1-XBP1 pathway of the unfolded protein response. Interacts with CLU under stressed condition; interaction increases CLU protein stability; facilitates its retrotranslocation and redistribution to the mitochondria; cooperatively suppress stress-induced apoptosis by stabilizing mitochondrial membrane integrity. Interacts with CCDC47. Interacts with CLN3. Interacts with ELAPOR1; may regulate the function of HSPA5 in apoptosis and cell proliferation. Interacts with CASP7. Interacts with ILDR2; the interaction stabilizes ILDR2 expression. Interacts with ADAM7. As to quaternary structure, (Microbial infection) Interacts with Japanese encephalitis virus envelope protein E. (Microbial infection) Interacts with R.delemar invasin CotH3 on the surface of nasal epithelial cells. Interacts with R.delemar invasin CotH2. In terms of assembly, (Microbial infection) Interacts with Zika virus envelope protein E and non-structural protein 1 in a chaperone-client manner. In terms of processing, AMPylated by FICD. In unstressed cells, AMPylation at Thr-518 by FICD inactivates the chaperome activity: AMPylated form is locked in a relatively inert state and only weakly stimulated by J domain-containing proteins. In response to endoplasmic reticulum stress, de-AMPylation by the same protein, FICD, restores the chaperone activity.

The protein localises to the endoplasmic reticulum lumen. Its subcellular location is the melanosome. The protein resides in the cytoplasm. It localises to the cell surface. The enzyme catalyses ATP + H2O = ADP + phosphate + H(+). Its activity is regulated as follows. The chaperone activity is regulated by ATP-induced allosteric coupling of the nucleotide-binding (NBD) and substrate-binding (SBD) domains. In the ADP-bound and nucleotide-free (apo) states, the two domains have little interaction. In contrast, in the ATP-bound state the two domains are tightly coupled, which results in drastically accelerated kinetics in both binding and release of polypeptide substrates. J domain-containing co-chaperones (DNAJB9/ERdj4 or DNAJC10/ERdj5) stimulate the ATPase activity and are required for efficient substrate recognition by HSPA5/BiP. Homooligomerization inactivates participating HSPA5/BiP protomers and probably act as reservoirs to store HSPA5/BiP molecules when they are not needed by the cell. Its function is as follows. Endoplasmic reticulum chaperone that plays a key role in protein folding and quality control in the endoplasmic reticulum lumen. Involved in the correct folding of proteins and degradation of misfolded proteins via its interaction with DNAJC10/ERdj5, probably to facilitate the release of DNAJC10/ERdj5 from its substrate. Acts as a key repressor of the EIF2AK3/PERK and ERN1/IRE1-mediated unfolded protein response (UPR). In the unstressed endoplasmic reticulum, recruited by DNAJB9/ERdj4 to the luminal region of ERN1/IRE1, leading to disrupt the dimerization of ERN1/IRE1, thereby inactivating ERN1/IRE1. Also binds and inactivates EIF2AK3/PERK in unstressed cells. Accumulation of misfolded protein in the endoplasmic reticulum causes release of HSPA5/BiP from ERN1/IRE1 and EIF2AK3/PERK, allowing their homodimerization and subsequent activation. Plays an auxiliary role in post-translational transport of small presecretory proteins across endoplasmic reticulum (ER). May function as an allosteric modulator for SEC61 channel-forming translocon complex, likely cooperating with SEC62 to enable the productive insertion of these precursors into SEC61 channel. Appears to specifically regulate translocation of precursors having inhibitory residues in their mature region that weaken channel gating. May also play a role in apoptosis and cell proliferation. (Microbial infection) Plays an important role in viral binding to the host cell membrane and entry for several flaviruses such as Dengue virus, Zika virus and Japanese encephalitis virus. Acts as a component of the cellular receptor for Dengue virus serotype 2/DENV-2 on human liver cells. Functionally, (Microbial infection) Acts as a receptor for CotH proteins expressed by fungi of the order mucorales, the causative agent of mucormycosis, which plays an important role in epithelial cell invasion by the fungi. Acts as a receptor for R.delemar CotH3 in nasal epithelial cells, which may be an early step in rhinoorbital/cerebral mucormycosis (RCM) disease progression. This is Endoplasmic reticulum chaperone BiP from Homo sapiens (Human).